The sequence spans 282 residues: MRIDTVNVLLEALPYIKEFYGKTFVIKFGGSAMKQENAKKAFIQDIILLKYTGIKPIIVHGGGPAISQMMKDLGIEPVFKNGHRVTDEKTMEIVEMVLVGKINKEIVMNLNLHGGRAVGICGKDSKLIVAEKETKHGDIGYVGKVKKVNPEILHALIENDYIPVIAPVGIGEDGHSYNINADTAAAEIAKSLMAEKLILLTDVDGVLKDGKLISTLTPDEAEELIRDGTVTGGMIPKVECAVSAVRGGVGAVHIINGGLEHAILLEIFSRKGIGTMIKELEG.

Substrate contacts are provided by residues 62 to 63, R84, and N178; that span reads GG. L-arginine is bound by residues K196, S214, and 266-269; that span reads EIFS.

Homohexamer.

Its subcellular location is the cytoplasm. It catalyses the reaction N-acetyl-L-glutamate + ATP = N-acetyl-L-glutamyl 5-phosphate + ADP. The protein operates within amino-acid biosynthesis; L-arginine biosynthesis; N(2)-acetyl-L-ornithine from L-glutamate: step 2/4. Its activity is regulated as follows. Allosterically inhibited by arginine. In terms of biological role, catalyzes the ATP-dependent phosphorylation of N-acetyl-L-glutamate. The sequence is that of Acetylglutamate kinase from Thermotoga maritima (strain ATCC 43589 / DSM 3109 / JCM 10099 / NBRC 100826 / MSB8).